Here is a 482-residue protein sequence, read N- to C-terminus: Mannose-1-phosphate guanylyltransferase 2 (482 aa).

The protein belongs to the mannose-6-phosphate isomerase type 2 family.

The enzyme catalyses alpha-D-mannose 1-phosphate + GTP + H(+) = GDP-alpha-D-mannose + diphosphate. The protein operates within nucleotide-sugar biosynthesis; GDP-alpha-D-mannose biosynthesis; GDP-alpha-D-mannose from alpha-D-mannose 1-phosphate (GTP route): step 1/1. Its function is as follows. Involved in GDP-mannose biosynthesis which serves as the activated sugar nucleotide precursor for mannose residues in cell surface polysaccharides. This enzyme participates in synthesis of the LPS O antigen. This Escherichia coli O157:H7 protein is Mannose-1-phosphate guanylyltransferase 2 (manC2).